A 306-amino-acid polypeptide reads, in one-letter code: D-alanine--D-alanine ligase (306 aa).

One can recognise an ATP-grasp domain in the interval 107 to 300 (KAAYRTAGLP…FGQLCAWLVE (194 aa)). 134-184 (IAPPYVVKPNNEGSSVGIYIVHEATNSPPQLSEEMPAQVMVEAYAPGREMT) is a binding site for ATP. 3 residues coordinate Mg(2+): D251, E267, and N269.

Belongs to the D-alanine--D-alanine ligase family. Mg(2+) is required as a cofactor. Mn(2+) serves as cofactor.

The protein localises to the cytoplasm. It catalyses the reaction 2 D-alanine + ATP = D-alanyl-D-alanine + ADP + phosphate + H(+). It participates in cell wall biogenesis; peptidoglycan biosynthesis. Cell wall formation. This is D-alanine--D-alanine ligase from Ruegeria sp. (strain TM1040) (Silicibacter sp.).